We begin with the raw amino-acid sequence, 513 residues long: Sphingosine-1-phosphate transporter SPNS2 (513 aa).

Transmembrane regions (helical) follow at residues 102–122 (GLLQ…FGYL), 130–150 (VILS…SFIP), 163–183 (LVGI…GDLF), 190–210 (LMLS…YITG), 222–242 (WALR…LIFV), 276–296 (LATS…PLYL), 320–340 (LIFG…GAGA), 354–374 (LVCA…FVAA), 378–398 (IIAA…NWAI), 422–442 (TSHL…SDLI), and 463–483 (LCPF…LFFL).

Belongs to the major facilitator superfamily. Spinster (TC 2.A.1.49) family.

The protein localises to the cell membrane. Its subcellular location is the endosome membrane. It carries out the reaction sphing-4-enine 1-phosphate(in) = sphing-4-enine 1-phosphate(out). It catalyses the reaction sphinganine 1-phosphate(in) = sphinganine 1-phosphate(out). Lipid transporter that specifically mediates export of sphingosine-1-phosphate (sphing-4-enine 1-phosphate, S1P) and sphinganine-1-phosphate. The protein is Sphingosine-1-phosphate transporter SPNS2 (spns2) of Xenopus tropicalis (Western clawed frog).